A 207-amino-acid polypeptide reads, in one-letter code: NADH-ubiquinone oxidoreductase chain 6 (207 aa).

Helical transmembrane passes span 15–35, 40–60, 66–86, 116–136, and 184–204; these read ILLDIISILSIISSIAIILVS, SILYLIILFINIAIYLYLIGI, LYILVYIGAIAVLFLFILSLF, LFILIIIIFYYNMINYFNNIY, and ILLIFISFLLLFSILSAIVLT.

Belongs to the complex I subunit 6 family.

The protein resides in the mitochondrion membrane. It catalyses the reaction a ubiquinone + NADH + 5 H(+)(in) = a ubiquinol + NAD(+) + 4 H(+)(out). Functionally, core subunit of the mitochondrial membrane respiratory chain NADH dehydrogenase (Complex I) that is believed to belong to the minimal assembly required for catalysis. Complex I functions in the transfer of electrons from NADH to the respiratory chain. The immediate electron acceptor for the enzyme is believed to be ubiquinone. This chain is NADH-ubiquinone oxidoreductase chain 6 (ND6), found in Wickerhamomyces canadensis (Yeast).